Reading from the N-terminus, the 317-residue chain is Tyrosine--tRNA ligase (317 aa).

Tyr33 serves as a coordination point for L-tyrosine. The 'HIGH' region motif lies at 38–46 (PSGKIHMGH). The L-tyrosine site is built by Tyr155, Gln159, Asp162, and Gln177. A 'KMSKS' region motif is present at residues 211 to 215 (KMSSS). Position 214 (Ser214) interacts with ATP.

It belongs to the class-I aminoacyl-tRNA synthetase family. TyrS type 3 subfamily. In terms of assembly, homodimer.

The protein resides in the cytoplasm. The catalysed reaction is tRNA(Tyr) + L-tyrosine + ATP = L-tyrosyl-tRNA(Tyr) + AMP + diphosphate + H(+). Functionally, catalyzes the attachment of tyrosine to tRNA(Tyr) in a two-step reaction: tyrosine is first activated by ATP to form Tyr-AMP and then transferred to the acceptor end of tRNA(Tyr). This Methanococcoides burtonii (strain DSM 6242 / NBRC 107633 / OCM 468 / ACE-M) protein is Tyrosine--tRNA ligase.